The following is a 428-amino-acid chain: uncharacterized protein (428 aa).

The interval 1 to 49 (MRTQTFPPSSSSSRTTHPKKNRHSSNSSSMALVTPAKSSTGAAPKQSSQ) is disordered. The segment covering 24-49 (SSNSSSMALVTPAKSSTGAAPKQSSQ) has biased composition (polar residues).

This is an uncharacterized protein from Caenorhabditis elegans.